The chain runs to 361 residues: Ankyrin repeat domain-containing protein 16 (361 aa).

ANK repeat units lie at residues 36-66, 70-99, 103-132, 136-165, 170-200, 204-233, 238-268, 273-302, and 306-335; these read AGDTLLHCAARHGRQDILAYLVEAWSMDIEA, DYKRPLHEAASMGHRDCVRYLLGRGAVVDS, ADWTPLMMACTRKNLDVIQDLVEHGANPLL, DGWNSFHIASREGHPVILRYLLTVCPDAWK, IRRTPLHTAAMHGCLEAVQVLLERCHYEPDC, CGVTPFMDAIQCGHVSIAKLLLEQHKACSS, MGAQALHRAAVTGQDEAIRFLVCGLGIDVDV, SQLTALHYAAKEGQTNTVQTLLSLGADINS, and RNRSVLHLACAGQHVACTRLLLQSGLKDSE.

Interacts with AARS; the interaction is direct. In terms of tissue distribution, widely expressed in brain (at protein level).

The protein resides in the cytoplasm. The protein localises to the nucleus. Functionally, required to prevent the misactivation of serine (Ser) with tRNA(Ala) by promoting the hydrolysis of Ser-mischarged tRNA(Ala), thereby playing a role in translational fidelity. Binds directly to the catalytic domain of AARS/AlaRS and captures Ser that is misactivated by AARS/AlaRS, preventing the charging of Ser adenylates to tRNA(Ala) and precluding Ser misincorporation in nascent peptides. This chain is Ankyrin repeat domain-containing protein 16, found in Mus musculus (Mouse).